The chain runs to 253 residues: 5'/3'-nucleotidase SurE (253 aa).

A divalent metal cation is bound by residues aspartate 8, aspartate 9, serine 39, and asparagine 92.

Belongs to the SurE nucleotidase family. The cofactor is a divalent metal cation.

The protein localises to the cytoplasm. The catalysed reaction is a ribonucleoside 5'-phosphate + H2O = a ribonucleoside + phosphate. The enzyme catalyses a ribonucleoside 3'-phosphate + H2O = a ribonucleoside + phosphate. It carries out the reaction [phosphate](n) + H2O = [phosphate](n-1) + phosphate + H(+). Nucleotidase with a broad substrate specificity as it can dephosphorylate various ribo- and deoxyribonucleoside 5'-monophosphates and ribonucleoside 3'-monophosphates with highest affinity to 3'-AMP. Also hydrolyzes polyphosphate (exopolyphosphatase activity) with the preference for short-chain-length substrates (P20-25). Might be involved in the regulation of dNTP and NTP pools, and in the turnover of 3'-mononucleotides produced by numerous intracellular RNases (T1, T2, and F) during the degradation of various RNAs. This Escherichia coli O7:K1 (strain IAI39 / ExPEC) protein is 5'/3'-nucleotidase SurE.